The primary structure comprises 590 residues: CTP synthase (590 aa).

Positions 1-281 are amidoligase domain; that stretch reads MPALRKHPQT…DAYVVRRLNL (281 aa). Serine 23 contributes to the CTP binding site. Serine 23 contacts UTP. ATP-binding positions include 24-29 and aspartate 81; that span reads SLGKGL. The Mg(2+) site is built by aspartate 81 and glutamate 155. CTP-binding positions include 162–164, 202–207, and lysine 238; these read DIE and KTKPTQ. Residues 202-207 and lysine 238 each bind UTP; that span reads KTKPTQ. Residues 306-554 enclose the Glutamine amidotransferase type-1 domain; it reads RIALVGKYID…IGAAIDYKAA (249 aa). Glycine 369 provides a ligand contact to L-glutamine. The active-site Nucleophile; for glutamine hydrolysis is the cysteine 396. Residues 397-400, glutamate 419, and arginine 480 each bind L-glutamine; that span reads LGLQ. Active-site residues include histidine 527 and glutamate 529.

Belongs to the CTP synthase family. Homotetramer.

It catalyses the reaction UTP + L-glutamine + ATP + H2O = CTP + L-glutamate + ADP + phosphate + 2 H(+). It carries out the reaction L-glutamine + H2O = L-glutamate + NH4(+). The enzyme catalyses UTP + NH4(+) + ATP = CTP + ADP + phosphate + 2 H(+). It participates in pyrimidine metabolism; CTP biosynthesis via de novo pathway; CTP from UDP: step 2/2. Its activity is regulated as follows. Allosterically activated by GTP, when glutamine is the substrate; GTP has no effect on the reaction when ammonia is the substrate. The allosteric effector GTP functions by stabilizing the protein conformation that binds the tetrahedral intermediate(s) formed during glutamine hydrolysis. Inhibited by the product CTP, via allosteric rather than competitive inhibition. Its function is as follows. Catalyzes the ATP-dependent amination of UTP to CTP with either L-glutamine or ammonia as the source of nitrogen. Regulates intracellular CTP levels through interactions with the four ribonucleotide triphosphates. The sequence is that of CTP synthase from Mycolicibacterium smegmatis (strain ATCC 700084 / mc(2)155) (Mycobacterium smegmatis).